Reading from the N-terminus, the 435-residue chain is MTVADRAPLDVAIIGGGIIGIMTALGLLHRGFRVTVYERAASWPEIGAAFAFTGVARQCMERLDPRVLESLARVAQRSPHEKVRYWDGFHPRTKEAAQEESAVLFEILEKHMAYWACIRGHFLLDMAAQLPDGVVQFGKRLVDYNDDEANEKVVLCFADGSTAESDVVIACDGIHSATRKVLLGVDHPAANASYSRKSMYRAMVPMADAVSALGTEKAHVQIAHLGPDAHVVSFPVNNGQVYNVFLFLHDPNEWDHGHTMTVPSSRSEVMDAIQGWGPHIKEIVSCFPETVSKYAIFDQADNPLPYYASGRVCLAGDAAHASSPFHGAGACMGVEDALVLAELLGLVDAGPVAARQRNIKAALQTYSSVRIERSQWLVQSSRDMGDLYEWRYPPTGEDGAKCKAEFERRSKVIWDFDVDGMVAGAKKKYEHSMEA.

Residues 8–28 (PLDVAIIGGGIIGIMTALGLL) form a helical membrane-spanning segment. Residues glutamate 38, alanine 51, and arginine 119 each contribute to the FAD site. A glycan (N-linked (GlcNAc...) asparagine) is linked at asparagine 191. The active site involves arginine 201. Aspartate 317 and alanine 330 together coordinate FAD.

It belongs to the paxM FAD-dependent monooxygenase family. It depends on FAD as a cofactor.

The protein localises to the membrane. The protein operates within secondary metabolite biosynthesis. FAD-dependent monooxygenase; part of the cluster B that mediates the biosynthesis of azasperpyranones, members of the azaphilone family that exhibit anti-cancer activities. Azasperpyranones are synthesized by 2 clusters, A and B. Cluster A is responsible for the production of the polyhydric phenol moiety while the azaphilonoid scaffold is produced by the cluster B. The non-reducing polyketide synthase ATEG_03629 produces 5-methyl orsellinic acid, which is then reduced to 5-methyl orsellinic aldehyde by the NRPS-like protein ATEG_03630. 5-methyl orsellinic aldehyde is then first hydroxylated by the FAD-dependent monooxygenase ATEG_03635 and subsequently hydroxylated by the cytochrome P450 monooxygenase ATEG_03631 to produce the unstable polyhydric phenol precursor of azasperpyranones. On the other hand, the polyketide synthase ATEG_07659 is responsible for producing the 3,5-dimethyloctadienone moiety from acetyl-CoA, three malonyl-CoA, and two S-adenosyl methionines (SAM). The 3,5-dimethyloctadienone moiety is then loaded onto the SAT domain of ATEG_07661 and extended with four malonyl-CoA and one SAM, which leads to the formation of 2,4-dihydroxy-6-(5,7-dimethyl-2-oxo-trans-3-trans-5-nonadienyl)-3-methylbenzaldehyde (compound 8) after reductive release and aldol condensation. The FAD-dependent monooxygenase ATEG_07662 is the next enzyme in the biosynthesis sequence and hydroxylates the side chain at the benzylic position of compound 8. In Aspergillus nidulans, afoF, the ortholog of the FAD-dependent oxygenase ATEG_07660, is the key enzyme for the biosynthesis of asperfuranone by catalyzing the hydroxylation at C-8 of to prevent the formation of a six-membered ring hemiacetal intermediate and thus facilitating the formation of a five-membered ring to produce asperfuranone. In Aspergillus terreus, ATEG_07660 is probably not functional, which leads to the formation of the six-membered ring hemiacetal intermediate presperpyranone instead of asperfuranone. Finally, ATEG_03636 is involved in the condensation of the polyhydric phenol moiety produced by cluster A and the perasperpyranone precursor produced by cluster B, to yield azasperpyranone A. Further modifications of azasperpyranone A result in the production of derivatives, including azasperpyranone B to F. This is FAD-dependent monooxygenase ATEG_07662 from Aspergillus terreus (strain NIH 2624 / FGSC A1156).